The primary structure comprises 435 residues: Xylose isomerase (435 aa).

Catalysis depends on residues His99 and Asp102. Mg(2+)-binding residues include Glu230, Glu266, His269, Asp294, Asp305, Asp307, and Asp337.

This sequence belongs to the xylose isomerase family. As to quaternary structure, homotetramer. The cofactor is Mg(2+).

The protein localises to the cytoplasm. It carries out the reaction alpha-D-xylose = alpha-D-xylulofuranose. This chain is Xylose isomerase, found in Enterococcus faecalis (strain ATCC 700802 / V583).